A 969-amino-acid polypeptide reads, in one-letter code: RNA polymerase-associated protein RapA (969 aa).

A Helicase ATP-binding domain is found at 162 to 339 (EVGQRVAPRV…FARLALLDAD (178 aa)). Residue 175–182 (DEVGLGKT) coordinates ATP. The DEAH box signature appears at 285–288 (DEAH). One can recognise a Helicase C-terminal domain in the interval 492-663 (RIEWLITFLK…GFLKNPQAVG (172 aa)).

The protein belongs to the SNF2/RAD54 helicase family. RapA subfamily. Interacts with the RNAP. Has a higher affinity for the core RNAP than for the holoenzyme. Its ATPase activity is stimulated by binding to RNAP.

Its function is as follows. Transcription regulator that activates transcription by stimulating RNA polymerase (RNAP) recycling in case of stress conditions such as supercoiled DNA or high salt concentrations. Probably acts by releasing the RNAP, when it is trapped or immobilized on tightly supercoiled DNA. Does not activate transcription on linear DNA. Probably not involved in DNA repair. This Actinobacillus pleuropneumoniae serotype 7 (strain AP76) protein is RNA polymerase-associated protein RapA.